Here is an 859-residue protein sequence, read N- to C-terminus: Leucine--tRNA ligase (859 aa).

Residues 42-52 carry the 'HIGH' region motif; sequence PYPSGRLHMGH. The short motif at 618–622 is the 'KMSKS' region element; sequence KMSKS. Lys621 is an ATP binding site.

Belongs to the class-I aminoacyl-tRNA synthetase family.

It localises to the cytoplasm. It catalyses the reaction tRNA(Leu) + L-leucine + ATP = L-leucyl-tRNA(Leu) + AMP + diphosphate. This chain is Leucine--tRNA ligase, found in Shewanella baltica (strain OS155 / ATCC BAA-1091).